Reading from the N-terminus, the 120-residue chain is Large ribosomal subunit protein bL17 (120 aa).

It belongs to the bacterial ribosomal protein bL17 family. Part of the 50S ribosomal subunit. Contacts protein L32.

The polypeptide is Large ribosomal subunit protein bL17 (Anoxybacillus flavithermus (strain DSM 21510 / WK1)).